We begin with the raw amino-acid sequence, 2220 residues long: Calcineurin-binding protein cabin-1 (2220 aa).

Phosphoserine occurs at positions 10 and 11. Phosphothreonine is present on Thr-12. A phosphoserine mark is found at Ser-20 and Ser-66. 3 TPR repeats span residues 36 to 69 (AFAL…SLLR), 90 to 123 (YSTY…DSTD), and 125 to 157 (NLWY…NPDH). A disordered region spans residues 361–400 (GAPVGDISGGDKSKKGVKRKKISEESGETAKRRSARVRNT). Positions 382–391 (ISEESGETAK) are enriched in basic and acidic residues. Phosphoserine occurs at positions 433 and 450. The stretch at 615–648 (VRVYWLKARFLALQGDMEQALENYDICTEMLQSS) is one TPR 4 repeat. Ser-673 carries the phosphoserine modification. TPR repeat units follow at residues 1055–1088 (NELY…CPNR) and 1106–1139 (KLNS…DSSN). Disordered regions lie at residues 1299 to 1476 (FARG…STPT), 1668 to 1845 (AEGS…RLSR), 1916 to 2165 (AQRQ…GSIS), and 2197 to 2220 (VLET…YMDI). The segment covering 1301–1324 (RGEEKNTPKASEKEKACLVDEDSH) has biased composition (basic and acidic residues). A compositionally biased stretch (low complexity) spans 1327 to 1349 (AGTLPGPGASLPSSSGPGLTSPP). Residues 1377-1397 (DSTAVALSDSSSTQDFFNEPT) are compositionally biased toward polar residues. The span at 1402 to 1412 (GSRKSYTEKRL) shows a compositional bias: basic and acidic residues. Position 1439 is a phosphoserine (Ser-1439). The span at 1715 to 1725 (SGPGPEPGGKV) shows a compositional bias: gly residues. 2 stretches are compositionally biased toward basic and acidic residues: residues 1744-1753 (SGERKDKESP) and 1784-1794 (PARDRGPESRP). Positions 1812–1823 (PLTPAQPAPAPA) are enriched in pro residues. 2 stretches are compositionally biased toward polar residues: residues 1918-1927 (RQASGDTPTT) and 1975-1989 (TIIT…STLD). Phosphothreonine is present on Thr-1924. Residues 2070 to 2081 (GKLRPEPRRDGE) are compositionally biased toward basic and acidic residues. A compositionally biased stretch (low complexity) spans 2091–2112 (PLSSPPTAASSKAPSSGSAQPP). Ser-2094 is modified (phosphoserine). The segment at 2116–2153 (PGKPEPSRAKSRPLPNMPKLVIPSAATKFPPEITVTPP) is required for interaction with calcineurin. Thr-2151 and Thr-2154 each carry phosphothreonine. The span at 2207–2220 (LESETDEDDDYMDI) shows a compositional bias: acidic residues.

Component of a complex that includes at least ASF1A, CABIN1, HIRA, histone H3.3 and UBN1. Interacts with calcineurin. Interacts with MEF2B. Post-translationally, activated through PKC-mediated hyperphosphorylation. Phosphorylation by the DNA damage kinases ATM and CHK2 enhances ubiquitination. In terms of processing, upon genotoxic stress, ubiquitination by the DCX(DDB2) E3 ubiquitin-protein ligase complex targets CABIN1 for proteasomal degradation, leading to the release of p53/TP53. In terms of tissue distribution, widely expressed in different tissues.

It is found in the nucleus. May be required for replication-independent chromatin assembly. May serve as a negative regulator of T-cell receptor (TCR) signaling via inhibition of calcineurin. Inhibition of activated calcineurin is dependent on both PKC and calcium signals. Acts as a negative regulator of p53/TP53 by keeping p53 in an inactive state on chromatin at promoters of a subset of it's target genes. In Homo sapiens (Human), this protein is Calcineurin-binding protein cabin-1 (CABIN1).